We begin with the raw amino-acid sequence, 404 residues long: Tryptophan synthase beta chain (404 aa).

Lys94 bears the N6-(pyridoxal phosphate)lysine mark.

This sequence belongs to the TrpB family. Tetramer of two alpha and two beta chains. Pyridoxal 5'-phosphate is required as a cofactor.

The enzyme catalyses (1S,2R)-1-C-(indol-3-yl)glycerol 3-phosphate + L-serine = D-glyceraldehyde 3-phosphate + L-tryptophan + H2O. It functions in the pathway amino-acid biosynthesis; L-tryptophan biosynthesis; L-tryptophan from chorismate: step 5/5. The beta subunit is responsible for the synthesis of L-tryptophan from indole and L-serine. The polypeptide is Tryptophan synthase beta chain (Staphylococcus aureus (strain MRSA252)).